Consider the following 361-residue polypeptide: Polyribonucleotide 5'-hydroxyl-kinase MJ1315 (361 aa).

Residue 39–46 (GGVDSGKT) coordinates ATP.

The cofactor is a divalent metal cation.

The catalysed reaction is a 5'-end dephospho-2'-deoxyribonucleoside-DNA + ATP = a 5'-end 5'-phospho-2'-deoxyribonucleoside-DNA + ADP + H(+). It carries out the reaction a 5'-end dephospho-ribonucleoside-RNA + ATP = a 5'-end 5'-phospho-ribonucleoside-RNA + ADP + H(+). Its function is as follows. Polynucleotide kinase that can phosphorylate the 5'-hydroxyl groups of both single-stranded RNA (ssRNA) and single-stranded DNA (ssDNA). Exhibits a strong preference for ssRNA. The polypeptide is Polyribonucleotide 5'-hydroxyl-kinase MJ1315 (Methanocaldococcus jannaschii (strain ATCC 43067 / DSM 2661 / JAL-1 / JCM 10045 / NBRC 100440) (Methanococcus jannaschii)).